Here is a 250-residue protein sequence, read N- to C-terminus: Ribosomal RNA small subunit methyltransferase J (250 aa).

S-adenosyl-L-methionine is bound by residues 101–102 (RD), 117–118 (ER), 153–154 (SS), and Asp-171.

The protein belongs to the methyltransferase superfamily. RsmJ family.

It is found in the cytoplasm. It catalyses the reaction guanosine(1516) in 16S rRNA + S-adenosyl-L-methionine = N(2)-methylguanosine(1516) in 16S rRNA + S-adenosyl-L-homocysteine + H(+). Specifically methylates the guanosine in position 1516 of 16S rRNA. The polypeptide is Ribosomal RNA small subunit methyltransferase J (Shigella flexneri serotype 5b (strain 8401)).